The following is a 985-amino-acid chain: Na(+)/H(+) antiporter (985 aa).

Topologically, residues 1-12 are cytoplasmic; it reads MAIWEQLEVSKA. Residues 13 to 33 traverse the membrane as a helical segment; that stretch reads HVAYACVGVFSSIFSLVSLYV. Residues 34 to 36 are Extracellular-facing; sequence KEK. Residues 37 to 57 traverse the membrane as a helical segment; sequence LYIGESTVAGIFGLIVGPVCL. Over 58–70 the chain is Cytoplasmic; it reads NWFNPLKWGNSDS. The chain crosses the membrane as a helical span at residues 71-91; the sequence is ITLEITRIVLCLQIFAVAVEL. Over 92–105 the chain is Extracellular; it reads PRKYMLKHWVSVTM. Residues 106 to 126 traverse the membrane as a helical segment; it reads LLLPVMTAGWLIIGLFVWILI. Residues 127-128 lie on the Cytoplasmic side of the membrane; it reads PG. A helical membrane pass occupies residues 129-149; that stretch reads LNFSASLLISACITATDPILA. Over 150–176 the chain is Extracellular; it reads QSVVSGKFAQRVPGHLRNLLSAESGCN. A helical transmembrane segment spans residues 177-197; that stretch reads DGMAFPFLFLSMNLILHPGNG. Residues 198-203 lie on the Cytoplasmic side of the membrane; it reads REIVKD. A helical membrane pass occupies residues 204 to 224; it reads WICVTILYECLFGCLLGCFIG. Topologically, residues 225–244 are extracellular; the sequence is YVGRITIRFAEKKNIIDRES. The helical transmembrane segment at 245-265 threads the bilayer; that stretch reads FLAFYVVLAFMCAGFGSILGV. The Cytoplasmic segment spans residues 266-294; it reads DDLLVSFAAGATFAWDGWFSQKTQESNVS. Residues 295 to 315 form a helical membrane-spanning segment; it reads TVIDLLLNYAYFIYFGAIIPW. Topologically, residues 316-319 are extracellular; it reads SQFN. Residues 320 to 340 form a helical membrane-spanning segment; that stretch reads NGEIGTNVWRLIILSIVVIFL. Over 341-361 the chain is Cytoplasmic; the sequence is RRIPAVMILRPLIPDIKSWRE. Residues 362–382 form a helical membrane-spanning segment; it reads ALFVGHFGPIGVGAIFAAILA. The Extracellular portion of the chain corresponds to 383–410; that stretch reads RGELESTFSDEPTPLNVVPSKEESKHWQ. A helical membrane pass occupies residues 411 to 431; that stretch reads LIACIWPITCFFIVTSIIVHG. Residues 432 to 985 lie on the Cytoplasmic side of the membrane; that stretch reads SSVAIITLGR…ALSKTLGLNK (554 aa). Disordered regions lie at residues 489–701 and 726–760; these read MTLS…KPGT and DRNE…GGRL. Residues 517–526 are compositionally biased toward polar residues; the sequence is NNDQIGSVAT. A compositionally biased stretch (basic residues) spans 538–558; the sequence is PRRRKLSRKEKRLNRRQKLRN. Basic and acidic residues-rich tracts occupy residues 559–572 and 580–593; these read KGRE…KNEM and DLGR…KEAR. Phosphoserine is present on Ser568. Residues 637-646 are compositionally biased toward low complexity; the sequence is SFESSERSSS. A compositionally biased stretch (acidic residues) spans 661-675; sequence EETESEIESEDEMEN. The segment covering 676 to 698 has biased composition (basic and acidic residues); that stretch reads ESERSMASSEERRIRKMKEEEMK. Positions 743–756 are enriched in low complexity; sequence SSLTTTMTNLSSSS. Residue Thr765 is modified to Phosphothreonine. Phosphoserine is present on residues Ser768 and Ser774. Residues 812-985 form a disordered region; it reads INPHKSDDDK…ALSKTLGLNK (174 aa). Basic and acidic residues-rich tracts occupy residues 815 to 828 and 854 to 863; these read HKSD…RPRN and DEEKAIEGPS. The segment covering 887–920 has biased composition (acidic residues); that stretch reads LDLEDEPSSEEDLGDSYNMDDSEDYDDNAYESET. Positions 970–979 are enriched in low complexity; that stretch reads SAAVKSALSK.

Belongs to the fungal Na(+)/H(+) exchanger family.

Its subcellular location is the cell membrane. Functionally, sodium export from cell, takes up external protons in exchange for internal sodium ions. Also capable of exporting potassium ions. This Saccharomyces cerevisiae (strain ATCC 204508 / S288c) (Baker's yeast) protein is Na(+)/H(+) antiporter (NHA1).